Reading from the N-terminus, the 110-residue chain is Large ribosomal subunit protein uL23c (110 aa).

This sequence belongs to the universal ribosomal protein uL23 family. As to quaternary structure, part of the 50S ribosomal subunit.

The protein localises to the plastid. It localises to the chloroplast. Functionally, binds to 23S rRNA. In Porphyra purpurea (Red seaweed), this protein is Large ribosomal subunit protein uL23c (rpl23).